We begin with the raw amino-acid sequence, 239 residues long: Yolk ferritin (239 aa).

The N-terminal stretch at 1 to 18 is a signal peptide; sequence MNSVLFLTLAVCSSLAYG. One can recognise a Ferritin-like diiron domain in the interval 27 to 217; it reads QNYKENINQL…HAITRLRSFE (191 aa). Fe cation is bound by residues Glu44 and Glu79. The segment at 105–146 is insertion; not present in other ferritins; that stretch reads KDACETVMKFVTSDTSGLEEFRDRRMCICGFVATKTINDNCG. Glu165 and Gln199 together coordinate Fe cation.

It belongs to the ferritin family. As to quaternary structure, oligomer of 12 or 24 subunits. The functional molecule is roughly spherical and contains a central cavity into which the polymeric ferric iron core is deposited. In terms of tissue distribution, midgut gland and bloodstream.

The protein localises to the secreted. It carries out the reaction 4 Fe(2+) + O2 + 4 H(+) = 4 Fe(3+) + 2 H2O. In terms of biological role, stores iron in a soluble, non-toxic, readily available form. Important for iron homeostasis. Has ferroxidase activity. Iron is taken up in the ferrous form and deposited as ferric hydroxides after oxidation. The protein is Yolk ferritin of Lymnaea stagnalis (Great pond snail).